The primary structure comprises 144 residues: Endoribonuclease YbeY (144 aa).

Zn(2+) is bound by residues histidine 105, histidine 109, and aspartate 115.

This sequence belongs to the endoribonuclease YbeY family. It depends on Zn(2+) as a cofactor.

Its subcellular location is the cytoplasm. Single strand-specific metallo-endoribonuclease involved in late-stage 70S ribosome quality control and in maturation of the 3' terminus of the 16S rRNA. This chain is Endoribonuclease YbeY, found in Chlorobium limicola (strain DSM 245 / NBRC 103803 / 6330).